A 561-amino-acid polypeptide reads, in one-letter code: Oxygen-dependent choline dehydrogenase (561 aa).

FAD is bound at residue 6 to 35 (DYIIIGAGSAGNVLATRLTEDADVSVLLLE). His475 (proton acceptor) is an active-site residue.

This sequence belongs to the GMC oxidoreductase family. Requires FAD as cofactor.

The catalysed reaction is choline + A = betaine aldehyde + AH2. It carries out the reaction betaine aldehyde + NAD(+) + H2O = glycine betaine + NADH + 2 H(+). The protein operates within amine and polyamine biosynthesis; betaine biosynthesis via choline pathway; betaine aldehyde from choline (cytochrome c reductase route): step 1/1. Functionally, involved in the biosynthesis of the osmoprotectant glycine betaine. Catalyzes the oxidation of choline to betaine aldehyde and betaine aldehyde to glycine betaine at the same rate. In Pseudomonas aeruginosa (strain UCBPP-PA14), this protein is Oxygen-dependent choline dehydrogenase.